The primary structure comprises 59 residues: UPF0391 membrane protein lpl2443 (59 aa).

Transmembrane regions (helical) follow at residues 5-25 and 30-50; these read ALIF…GIAV and IAKI…IMGL.

The protein belongs to the UPF0391 family.

It localises to the cell membrane. The polypeptide is UPF0391 membrane protein lpl2443 (Legionella pneumophila (strain Lens)).